A 50-amino-acid polypeptide reads, in one-letter code: Small ribosomal subunit protein uS14 (50 aa).

Zn(2+) is bound by residues cysteine 15, cysteine 18, cysteine 33, and cysteine 36.

Belongs to the universal ribosomal protein uS14 family. Zinc-binding uS14 subfamily. As to quaternary structure, part of the 30S ribosomal subunit. Requires Zn(2+) as cofactor.

Its function is as follows. Binds 16S rRNA, required for the assembly of 30S particles. The protein is Small ribosomal subunit protein uS14 of Methanosarcina barkeri (strain Fusaro / DSM 804).